The primary structure comprises 113 residues: Hydrogenase maturation factor HypA (113 aa).

A Ni(2+)-binding site is contributed by histidine 2. Positions 73, 76, 89, and 92 each coordinate Zn(2+).

The protein belongs to the HypA/HybF family.

Involved in the maturation of [NiFe] hydrogenases. Required for nickel insertion into the metal center of the hydrogenase. This Prosthecochloris aestuarii (strain DSM 271 / SK 413) protein is Hydrogenase maturation factor HypA.